Consider the following 345-residue polypeptide: MGLAGTKVKQRFGLDPRNTNWSNNNNQFGHQYLTKMGWTPGKGIGLVPDSITTHLKINIKTDNAGLGAKLQKRNKDANELDECSGVDAFQRILGRLNGKEDAVNKVMDMKRDDMIINGKMGIRFVKGEVLSSTWDKEKKALISYANGKNEDKKDKDEVSLLRKRKVEDEEKREVKKSRKDIKEKKEKKEKKEKKEKKEKKEKKEKKEKKEKKEKKEKKEKKEKKEKKEKKEKSDKKEKKEKKDKKEKKEKKEKKEKKEKKEKKEKKEKKEKKEKKEKKEKKDKLDKESSNAANVESTKSLVSDSSRESTPTPIASRLSVRSKWIKQKRASVMDAKALNEIFMISN.

Disordered regions lie at residues 1–25 and 166–317; these read MGLAGTKVKQRFGLDPRNTNWSNNN and VEDE…ASRL. Positions 25-71 constitute a G-patch domain; sequence NNQFGHQYLTKMGWTPGKGIGLVPDSITTHLKINIKTDNAGLGAKLQ. Over residues 187–227 the composition is skewed to basic residues; it reads KKEKKEKKEKKEKKEKKEKKEKKEKKEKKEKKEKKEKKEKK. Residues 228–237 show a composition bias toward basic and acidic residues; that stretch reads EKKEKSDKKE. A compositionally biased stretch (basic residues) spans 238-278; the sequence is KKEKKDKKEKKEKKEKKEKKEKKEKKEKKEKKEKKEKKEKK. Residues 279–288 show a composition bias toward basic and acidic residues; the sequence is EKKDKLDKES. Residues 289–312 show a composition bias toward polar residues; the sequence is SNAANVESTKSLVSDSSRESTPTP.

Belongs to the PINX1 family.

The protein localises to the nucleus. Its subcellular location is the nucleolus. Involved in rRNA-processing at A0, A1 and A2 sites and negatively regulates telomerase. This chain is Protein PXR1 (PXR1), found in Lodderomyces elongisporus (strain ATCC 11503 / CBS 2605 / JCM 1781 / NBRC 1676 / NRRL YB-4239) (Yeast).